The following is a 67-amino-acid chain: Large ribosomal subunit protein uL29 (67 aa).

This sequence belongs to the universal ribosomal protein uL29 family.

This Ehrlichia canis (strain Jake) protein is Large ribosomal subunit protein uL29.